Reading from the N-terminus, the 581-residue chain is Intermediate filament protein ifa-2 (581 aa).

2 disordered regions span residues 1-35 (MTDP…GSGN) and 47-68 (SSVS…RDNR). Residues 1 to 74 (MTDPDSYRSS…RDNREREKKE (74 aa)) are head. The span at 7 to 28 (YRSSITSRPSFNRTVTSSSQNY) shows a compositional bias: polar residues. The 354-residue stretch at 71–424 (EKKEIMELND…QMLEGNSEGN (354 aa)) folds into the IF rod domain. The coil 1A stretch occupies residues 75–106 (IMELNDRLASYIEKVRFLDAQNRKLDADLKML). The tract at residues 107-120 (QGRFGKSTGSVKVM) is linker 1. Residues 121–258 (YEMEITTATN…RGFETELKEL (138 aa)) form a coil 1B region. Positions 259 to 276 (QAQAARDTTSENREYFKN) are linker 12. Residues 277–424 (ELANAMRDIR…QMLEGNSEGN (148 aa)) form a coil 2 region. Residues 425 to 578 (GLRQLVEKVV…THIQRQSQQT (154 aa)) are tail. Residues 449 to 469 (RVVKGEHSSRTSYQRSAKGNV) are disordered. The LTD domain occupies 457-574 (SRTSYQRSAK…EERATHIQRQ (118 aa)).

The protein belongs to the intermediate filament family. Forms some heteromeric filaments with ifb-1. Mainly expressed in regions of the hypodermis adjacent to muscle. Expressed in longitudinal stripes where the mechanosensory neurons interface with the hypodermis. Also expressed to the uterine seam and within the uterine-vulval cells.

It is found in the cell junction. Its subcellular location is the hemidesmosome. In terms of biological role, cytoplasmic intermediate filaments provide mechanical strength to cells. Essential protein, involved in attachment structures in epidermal cells that connect muscles to the external cuticle. Probably acts by forming hypodermal hemidesmosome complexes that help mediate muscle-cuticle force transduction. Although expressed during embryogenesis, it is not required for embryonic development of muscle-cuticle linkages nor for the localization of other proteins to the hemidesmosomes in embryos. This Caenorhabditis elegans protein is Intermediate filament protein ifa-2.